The chain runs to 217 residues: Small ribosomal subunit protein uS3c (217 aa).

The 75-residue stretch at Ile-43–Ala-117 folds into the KH type-2 domain.

Belongs to the universal ribosomal protein uS3 family. Part of the 30S ribosomal subunit.

The protein resides in the plastid. Its subcellular location is the chloroplast. This is Small ribosomal subunit protein uS3c (rps3) from Platanus occidentalis (Sycamore).